The following is a 445-amino-acid chain: V-type proton ATPase subunit H (445 aa).

It belongs to the V-ATPase H subunit family. In terms of assembly, V-ATPase is a heteromultimeric enzyme composed of a peripheral catalytic V1 complex (components A to H) attached to an integral membrane V0 proton pore complex (components: a, c, c', c'' and d).

In terms of biological role, subunit of the peripheral V1 complex of vacuolar ATPase. Subunit H activates the ATPase activity of the enzyme and couples ATPase activity to proton flow. Vacuolar ATPase is responsible for acidifying a variety of intracellular compartments in eukaryotic cells, thus providing most of the energy required for transport processes in the vacuolar system. In Dictyostelium discoideum (Social amoeba), this protein is V-type proton ATPase subunit H (vatH).